The primary structure comprises 254 residues: Imidazole glycerol phosphate synthase subunit HisF (254 aa).

Residues Asp-11 and Asp-130 contribute to the active site.

This sequence belongs to the HisA/HisF family. As to quaternary structure, heterodimer of HisH and HisF.

The protein resides in the cytoplasm. It catalyses the reaction 5-[(5-phospho-1-deoxy-D-ribulos-1-ylimino)methylamino]-1-(5-phospho-beta-D-ribosyl)imidazole-4-carboxamide + L-glutamine = D-erythro-1-(imidazol-4-yl)glycerol 3-phosphate + 5-amino-1-(5-phospho-beta-D-ribosyl)imidazole-4-carboxamide + L-glutamate + H(+). Its pathway is amino-acid biosynthesis; L-histidine biosynthesis; L-histidine from 5-phospho-alpha-D-ribose 1-diphosphate: step 5/9. Its function is as follows. IGPS catalyzes the conversion of PRFAR and glutamine to IGP, AICAR and glutamate. The HisF subunit catalyzes the cyclization activity that produces IGP and AICAR from PRFAR using the ammonia provided by the HisH subunit. The protein is Imidazole glycerol phosphate synthase subunit HisF of Oceanobacillus iheyensis (strain DSM 14371 / CIP 107618 / JCM 11309 / KCTC 3954 / HTE831).